The following is a 109-amino-acid chain: Nucleoid-associated protein LJ_0424 (109 aa).

It belongs to the YbaB/EbfC family. In terms of assembly, homodimer.

The protein resides in the cytoplasm. The protein localises to the nucleoid. In terms of biological role, binds to DNA and alters its conformation. May be involved in regulation of gene expression, nucleoid organization and DNA protection. This is Nucleoid-associated protein LJ_0424 from Lactobacillus johnsonii (strain CNCM I-12250 / La1 / NCC 533).